The primary structure comprises 332 residues: CRISPR-associated endonuclease Cas1 3 (332 aa).

Residues glutamate 159, histidine 224, and glutamate 239 each coordinate Mn(2+).

The protein belongs to the CRISPR-associated endonuclease Cas1 family. In terms of assembly, homodimer, forms a heterotetramer with a Cas2 homodimer. Mg(2+) is required as a cofactor. It depends on Mn(2+) as a cofactor.

CRISPR (clustered regularly interspaced short palindromic repeat), is an adaptive immune system that provides protection against mobile genetic elements (viruses, transposable elements and conjugative plasmids). CRISPR clusters contain spacers, sequences complementary to antecedent mobile elements, and target invading nucleic acids. CRISPR clusters are transcribed and processed into CRISPR RNA (crRNA). Acts as a dsDNA endonuclease. Involved in the integration of spacer DNA into the CRISPR cassette. The polypeptide is CRISPR-associated endonuclease Cas1 3 (Thermus thermophilus (strain ATCC 27634 / DSM 579 / HB8)).